Reading from the N-terminus, the 588-residue chain is Transcriptional regulatory protein ASH1 (588 aa).

Ser56 carries the phosphoserine modification. Disordered regions lie at residues 85-109, 377-398, and 417-495; these read SNTA…GNSP, SNNS…QASN, and SSVS…TRHT. Over residues 99 to 109 the composition is skewed to polar residues; the sequence is PISSLTPGNSP. Residues 383 to 392 are compositionally biased toward basic residues; that stretch reads NVRKPSKNKI. Low complexity predominate over residues 417-433; sequence SSVSASSSPSPSTPTKS. Phosphoserine is present on Ser465. Over residues 470–493 the composition is skewed to low complexity; it reads PRRSSNSSITKKGSRRSSGSSPTR. A GATA-type; atypical zinc finger spans residues 499 to 526; sequence CVSCHSSDSPCWRPSWSPRKQDQLCNSC.

Component of the RPD3C(L) complex composed of at least ASH1, CTI6, DEP1, PHO23, RPD3, RXT2, RXT3, SAP30, SDS3, SIN3, UME1 and UME6.

It localises to the nucleus. Component of the RPD3C(L) histone deacetylase complex (HDAC). Responsible for the deacetylation of lysine residues on the N-terminal part of the core histones (H2A, H2B, H3 and H4). Histone deacetylation gives a tag for epigenetic repression and plays an important role in transcriptional regulation, cell cycle progression and developmental events. ASH1 is necessary to repress HO in daughter cells to block mating-type switching through its binding to HO promoter 5'-YTGAT-3' sites. Also involved in pseudohyphal growth. In Saccharomyces cerevisiae (strain ATCC 204508 / S288c) (Baker's yeast), this protein is Transcriptional regulatory protein ASH1 (ASH1).